Consider the following 481-residue polypeptide: Cis-aconitate decarboxylase (481 aa).

Positions 462–481 (SPPEVASNSPACNNSITNLS) are disordered. Residues 467-481 (ASNSPACNNSITNLS) show a composition bias toward polar residues.

The protein belongs to the PrpD family. In terms of assembly, homodimer. In terms of tissue distribution, expressed in LPS-tolerized macrophages (at protein level). Expressed in peripheral blood mononuclear cells (PBMCs), microglia and macrophage cells.

The protein localises to the mitochondrion. It carries out the reaction cis-aconitate + H(+) = itaconate + CO2. Cis-aconitate decarboxylase that catalyzes production of itaconate and is involved in the inhibition of the inflammatory response. Acts as a negative regulator of the Toll-like receptors (TLRs)-mediated inflammatory innate response by stimulating the tumor necrosis factor alpha-induced protein TNFAIP3 expression via reactive oxygen species (ROS) in LPS-tolerized macrophages. Involved in antimicrobial response of innate immune cells; ACOD1-mediated itaconic acid production contributes to the antimicrobial activity of macrophages by generating itaconate, leading to alkylation of proteins, such as TFEB. Involved in antiviral response following infection by flavivirus in neurons: ACOD1-mediated itaconate production inhibits the activity of succinate dehydrogenase, generating a metabolic state in neurons that suppresses replication of viral genomes. Plays a role in the embryo implantation. The chain is Cis-aconitate decarboxylase from Homo sapiens (Human).